The sequence spans 182 residues: Dirigent protein 1 (182 aa).

Residues 1 to 24 form the signal peptide; it reads MAKRFLLLLPLLSSILLLAVSVTA. N125 is a glycosylation site (N-linked (GlcNAc...) asparagine).

It belongs to the plant dirigent protein family. In terms of assembly, homodimer.

The protein localises to the secreted. The protein resides in the extracellular space. It localises to the apoplast. Functionally, dirigent proteins impart stereoselectivity on the phenoxy radical-coupling reaction, yielding optically active lignans from two molecules of coniferyl alcohol in the biosynthesis of lignans, flavonolignans, and alkaloids and thus plays a central role in plant secondary metabolism. This Arabidopsis thaliana (Mouse-ear cress) protein is Dirigent protein 1 (DIR1).